The chain runs to 1220 residues: Osmosensing histidine protein kinase SLN1 (1220 aa).

At 1 to 22 (MRFGLPSKLELTPPFRIGIRTQ) the chain is on the cytoplasmic side. The chain crosses the membrane as a helical span at residues 23–46 (LTALVSIVALGSLIILAVTTGVYF). Over 47–333 (TSNYKNLRSD…FLSPATKLAK (287 aa)) the chain is Extracellular. N-linked (GlcNAc...) asparagine glycosylation is found at Asn-100, Asn-138, Asn-142, Asn-181, Asn-224, and Asn-272. A helical transmembrane segment spans residues 334 to 354 (IITGTVIAIGVFVILLTLPLA). Residues 355-1220 (HWAVQPIVRL…AAYQGKKNNK (866 aa)) lie on the Cytoplasmic side of the membrane. Disordered regions lie at residues 414 to 433 (GSTT…GAAF) and 444 to 500 (NLGN…HILT). Positions 451–468 (SPPEEENKIPNNHTDAKI) are enriched in basic and acidic residues. The residue at position 502 (Ser-502) is a Phosphoserine. The Histidine kinase domain occupies 573 to 928 (NISHELRTPL…KFTFTLPLNQ (356 aa)). Residue His-576 is modified to Phosphohistidine; by autocatalysis. Ser-758 and Ser-833 each carry phosphoserine. Disordered regions lie at residues 960 to 1016 (AKSI…DNGG) and 1040 to 1081 (NSLS…VKDD). The segment covering 965-984 (SRQSTSSVATPATNRSSLTN) has biased composition (polar residues). Residues 988–1000 (PEVRSKGKHETKD) show a composition bias toward basic and acidic residues. Phosphoserine occurs at positions 1041 and 1044. Residues 1063-1075 (LQSTGTATSSRNI) are compositionally biased toward polar residues. The Response regulatory domain occupies 1089–1210 (KILVVEDNHV…KLKTILTEFC (122 aa)). Glu-1094, Asp-1095, Asp-1144, and Lys-1195 together coordinate Mg(2+). 4-aspartylphosphate is present on Asp-1144.

Interacts with DJP1, MOG1 and YPD1. In terms of processing, the phosphorelay mechanism involves the sequential transfer of a phosphate group from His-576 (H1) in the histidine kinase domain (transmitter domain) to Asp-1144 (D1) of the response regulatory domain (receiver domain). This transfer probably occurs between two SLN1 molecules, rather than intramolecularly. The phosphate group is further transferred to 'His-64' (H2) of YPD1 and finally to 'Asp-554' (D2) of SSK1 or 'Asp-427' (D2) of SKN7.

The protein resides in the cell membrane. It carries out the reaction ATP + protein L-histidine = ADP + protein N-phospho-L-histidine.. In terms of biological role, histidine kinase that acts as an osmosensor at the plasma membrane. Part of the bifurcated SLN1-YPD1-SKN7/SSK1 two-component regulatory system, which controls activity of the HOG1 pathway and gene expression in response to changes in the osmolarity of the extracellular environment. Under normal osmotic conditions, the histidine kinase autophosphorylates His-576. This phosphate is subsequently transferred to Asp-1144, from where it is relayed to 'His-64' of the phosphorelay intermediate protein YPD1. Under high osmolarity conditions, the histidine kinase is no longer active. The sequence is that of Osmosensing histidine protein kinase SLN1 (SLN1) from Saccharomyces cerevisiae (strain ATCC 204508 / S288c) (Baker's yeast).